A 404-amino-acid chain; its full sequence is Probable tRNA sulfurtransferase (404 aa).

The region spanning 60–165 (TAVAESLKQV…EEAAYLSYET (106 aa)) is the THUMP domain. Residues 183 to 184 (ML), 208 to 209 (HF), Arg-265, Gly-287, and Gln-296 contribute to the ATP site.

The protein belongs to the ThiI family.

The protein localises to the cytoplasm. The catalysed reaction is [ThiI sulfur-carrier protein]-S-sulfanyl-L-cysteine + a uridine in tRNA + 2 reduced [2Fe-2S]-[ferredoxin] + ATP + H(+) = [ThiI sulfur-carrier protein]-L-cysteine + a 4-thiouridine in tRNA + 2 oxidized [2Fe-2S]-[ferredoxin] + AMP + diphosphate. The enzyme catalyses [ThiS sulfur-carrier protein]-C-terminal Gly-Gly-AMP + S-sulfanyl-L-cysteinyl-[cysteine desulfurase] + AH2 = [ThiS sulfur-carrier protein]-C-terminal-Gly-aminoethanethioate + L-cysteinyl-[cysteine desulfurase] + A + AMP + 2 H(+). It functions in the pathway cofactor biosynthesis; thiamine diphosphate biosynthesis. Its function is as follows. Catalyzes the ATP-dependent transfer of a sulfur to tRNA to produce 4-thiouridine in position 8 of tRNAs, which functions as a near-UV photosensor. Also catalyzes the transfer of sulfur to the sulfur carrier protein ThiS, forming ThiS-thiocarboxylate. This is a step in the synthesis of thiazole, in the thiamine biosynthesis pathway. The sulfur is donated as persulfide by IscS. The chain is Probable tRNA sulfurtransferase from Streptococcus pneumoniae serotype 2 (strain D39 / NCTC 7466).